A 287-amino-acid polypeptide reads, in one-letter code: MNKIRYPAVAGLFYPSHPDELIDMIEQCYLHKFGPKSMPVHGTYEKPIGLLCPHAGYVYSGPIQAHSYYELSKRVDALEETTVVILGPNHTGLGSGVSVMDGIWRTPLGDVKCDEEFVEELWRKCEIVDLDETAHLNEHSIEVQLPFLKHLELLNIAKFKIVPICMMFQDYETAVEVGYFIAKIAKELNRRIVVIASSDLTHYEPQEIASKKDAIVIKDILEMNEKELYEDVVNYNISMCGYGPVIAMLKAMKTLGAEKAKLLAYATSGDITGDYSAVVGYASAIVE.

This sequence belongs to the MEMO1 family.

The polypeptide is MEMO1 family protein MJ0403 (Methanocaldococcus jannaschii (strain ATCC 43067 / DSM 2661 / JAL-1 / JCM 10045 / NBRC 100440) (Methanococcus jannaschii)).